The following is a 73-amino-acid chain: Myosin-IB light chain (73 aa).

EF-hand domains lie at 3–38 (DEKT…GLPM) and 38–73 (MTEA…VDES). 4 residues coordinate Ca(2+): Asp16, Asp18, Asp20, and Glu27.

As to quaternary structure, myosin I is a dimer of a heavy and a light chain. Inability to self-assemble into filaments. Interacts with myoB. Does not interact with myoC or myoD.

Functions as the light chain for myosin-B. Binds calcium with submicromolar affinity and may sense physiological calcium changes. The polypeptide is Myosin-IB light chain (mlcB) (Dictyostelium discoideum (Social amoeba)).